Reading from the N-terminus, the 148-residue chain is SsrA-binding protein (148 aa).

Basic and acidic residues predominate over residues 129-142 (ETEKKRDWEREKAR). Residues 129–148 (ETEKKRDWEREKARIMRAGT) form a disordered region.

Belongs to the SmpB family.

The protein resides in the cytoplasm. Its function is as follows. Required for rescue of stalled ribosomes mediated by trans-translation. Binds to transfer-messenger RNA (tmRNA), required for stable association of tmRNA with ribosomes. tmRNA and SmpB together mimic tRNA shape, replacing the anticodon stem-loop with SmpB. tmRNA is encoded by the ssrA gene; the 2 termini fold to resemble tRNA(Ala) and it encodes a 'tag peptide', a short internal open reading frame. During trans-translation Ala-aminoacylated tmRNA acts like a tRNA, entering the A-site of stalled ribosomes, displacing the stalled mRNA. The ribosome then switches to translate the ORF on the tmRNA; the nascent peptide is terminated with the 'tag peptide' encoded by the tmRNA and targeted for degradation. The ribosome is freed to recommence translation, which seems to be the essential function of trans-translation. In Burkholderia lata (strain ATCC 17760 / DSM 23089 / LMG 22485 / NCIMB 9086 / R18194 / 383), this protein is SsrA-binding protein.